A 206-amino-acid chain; its full sequence is Large ribosomal subunit protein uL4 (206 aa).

Residues 44–87 (NRQGTQSAKTRSEVSGGGRKPWRQKGTGHARQGSTRSPQWTGGG) are disordered.

Belongs to the universal ribosomal protein uL4 family. In terms of assembly, part of the 50S ribosomal subunit.

In terms of biological role, one of the primary rRNA binding proteins, this protein initially binds near the 5'-end of the 23S rRNA. It is important during the early stages of 50S assembly. It makes multiple contacts with different domains of the 23S rRNA in the assembled 50S subunit and ribosome. Functionally, forms part of the polypeptide exit tunnel. This chain is Large ribosomal subunit protein uL4, found in Lachnospira eligens (strain ATCC 27750 / DSM 3376 / VPI C15-48 / C15-B4) (Eubacterium eligens).